Consider the following 383-residue polypeptide: 8-amino-7-oxononanoate synthase (383 aa).

R21 lines the substrate pocket. Residue 108–109 coordinates pyridoxal 5'-phosphate; sequence GF. H133 is a binding site for substrate. Pyridoxal 5'-phosphate contacts are provided by S179, H207, and T233. At K236 the chain carries N6-(pyridoxal phosphate)lysine. T350 serves as a coordination point for substrate.

Belongs to the class-II pyridoxal-phosphate-dependent aminotransferase family. BioF subfamily. In terms of assembly, homodimer. It depends on pyridoxal 5'-phosphate as a cofactor.

It catalyses the reaction 6-carboxyhexanoyl-[ACP] + L-alanine + H(+) = (8S)-8-amino-7-oxononanoate + holo-[ACP] + CO2. It participates in cofactor biosynthesis; biotin biosynthesis. In terms of biological role, catalyzes the decarboxylative condensation of pimeloyl-[acyl-carrier protein] and L-alanine to produce 8-amino-7-oxononanoate (AON), [acyl-carrier protein], and carbon dioxide. The chain is 8-amino-7-oxononanoate synthase from Cronobacter sakazakii (strain ATCC BAA-894) (Enterobacter sakazakii).